Consider the following 304-residue polypeptide: 4-diphosphocytidyl-2-C-methyl-D-erythritol kinase (304 aa).

Lysine 23 is an active-site residue. 111-121 (PIGGGLGGGSS) lines the ATP pocket. The active site involves aspartate 153.

Belongs to the GHMP kinase family. IspE subfamily. In terms of assembly, homodimer.

It carries out the reaction 4-CDP-2-C-methyl-D-erythritol + ATP = 4-CDP-2-C-methyl-D-erythritol 2-phosphate + ADP + H(+). The protein operates within isoprenoid biosynthesis; isopentenyl diphosphate biosynthesis via DXP pathway; isopentenyl diphosphate from 1-deoxy-D-xylulose 5-phosphate: step 3/6. Its function is as follows. Catalyzes the phosphorylation of the position 2 hydroxy group of 4-diphosphocytidyl-2C-methyl-D-erythritol. This chain is 4-diphosphocytidyl-2-C-methyl-D-erythritol kinase, found in Wigglesworthia glossinidia brevipalpis.